A 354-amino-acid chain; its full sequence is Guanine nucleotide-binding protein G(o) subunit alpha (354 aa).

Residue Gly-2 is the site of N-myristoyl glycine attachment. Residue Cys-3 is the site of S-palmitoyl cysteine attachment. Residues 32-354 (KDVKLLLLGA…ANNLRGCGLY (323 aa)) form the G-alpha domain. The segment at 35 to 48 (KLLLLGAGESGKST) is G1 motif. The GTP site is built by Glu-43, Lys-46, Ser-47, Thr-48, Ser-152, Leu-176, Arg-177, Thr-178, and Arg-179. Ser-47 is a Mg(2+) binding site. The interval 174 to 182 (DILRTRVKT) is G2 motif. Residue Arg-179 is modified to ADP-ribosylarginine; by cholera toxin. A Mg(2+)-binding site is contributed by Thr-182. Residues 197 to 206 (FRLFDVGGQR) are G3 motif. 5-glutamyl histamine is present on Gln-205. The G4 motif stretch occupies residues 266–273 (ILFLNKKD). 3 residues coordinate GTP: Asn-270, Asp-273, and Cys-325. Positions 324-329 (TCATDT) are G5 motif. A lipid anchor (S-palmitoyl cysteine) is attached at Cys-351. Position 351 is an ADP-ribosylcysteine; by pertussis toxin (Cys-351).

Belongs to the G-alpha family. G(i/o/t/z) subfamily. G proteins are composed of 3 units; alpha, beta and gamma. The alpha chain contains the guanine nucleotide binding site. Forms a complex with GNB1 and GNG3. Interacts with RGS14. Interacts with RGS16. Interacts with RGS19. Interacts (when palmitoylated) with ADGRG3. Post-translationally, histaminylated at Gln-205 residues by TGM2. Palmitoylated at Cys-351, leading to binding to ADGRG3.

The protein resides in the cell membrane. It localises to the membrane. The enzyme catalyses GTP + H2O = GDP + phosphate + H(+). With respect to regulation, the GTPase activity is promoted by GTPAse activators, such as RGS14, RGS16 and RGS19. Its function is as follows. Guanine nucleotide-binding proteins (G proteins) function as transducers downstream of G protein-coupled receptors (GPCRs) in numerous signaling cascades. The alpha chain contains the guanine nucleotide binding site and alternates between an active, GTP-bound state and an inactive, GDP-bound state. Signaling by an activated GPCR promotes GDP release and GTP binding. The alpha subunit has a low GTPase activity that converts bound GTP to GDP, thereby terminating the signal. Both GDP release and GTP hydrolysis are modulated by numerous regulatory proteins. Signaling is mediated via effector proteins, such as adenylate cyclase. Inhibits adenylate cyclase activity, leading to decreased intracellular cAMP levels. In Homo sapiens (Human), this protein is Guanine nucleotide-binding protein G(o) subunit alpha (GNAO1).